Consider the following 312-residue polypeptide: Mas-related G-protein coupled receptor member E (312 aa).

Residues 1-20 lie on the Extracellular side of the membrane; that stretch reads MMEPREAGQHVGAANGAQED. Residues 21-41 traverse the membrane as a helical segment; it reads VAFNLIILSLTEGLGLGGLLG. The Cytoplasmic segment spans residues 42–59; the sequence is NGAVLWLLSSNVYRNPFA. Residues 60–80 traverse the membrane as a helical segment; sequence IYLLDVACADLIFLGCHMVAI. Residues 81 to 106 lie on the Extracellular side of the membrane; the sequence is VPDLLQGRLDFPGFVQTSLATLRFFC. The helical transmembrane segment at 107-127 threads the bilayer; the sequence is YIVGLSLLAAVSVEQCLAALF. Topologically, residues 128–141 are cytoplasmic; that stretch reads PAWYSCRRPRHLTT. A helical transmembrane segment spans residues 142-162; it reads CVCALTWALCLLLHLLLSGAC. Residues 163–176 are Extracellular-facing; the sequence is TQFFGEPSRHLCRT. The helical transmembrane segment at 177–197 threads the bilayer; that stretch reads LWLVAAVLLALLCCTMCGASL. Over 198–217 the chain is Cytoplasmic; it reads MLLLRVERGPQRPPPRGFPG. Residues 218-238 form a helical membrane-spanning segment; sequence LILLTVLLFLFCGLPFGIYWL. Residues 239-241 are Extracellular-facing; that stretch reads SRN. A helical transmembrane segment spans residues 242-262; the sequence is LLWYIPHYFYHFSFLMAAVHC. Topologically, residues 263 to 312 are cytoplasmic; that stretch reads AAKPVVYFCLGSAQGRRLPLRLVLQRALGDEAELGAVRETSRRGLVDIAA.

It belongs to the G-protein coupled receptor 1 family. Mas subfamily.

It localises to the cell membrane. Its function is as follows. Orphan receptor. May regulate nociceptor function and/or development, including the sensation or modulation of pain. This is Mas-related G-protein coupled receptor member E (MRGPRE) from Homo sapiens (Human).